We begin with the raw amino-acid sequence, 32 residues long: Ranatuerin-2La (32 aa).

Cysteines 27 and 32 form a disulfide.

In terms of tissue distribution, expressed by the skin glands.

The protein localises to the secreted. In terms of biological role, antibacterial activity against Gram-positive bacterium S.aureus and Gram-negative bacterium E.coli. Weak activity against C.albicans. This Rana luteiventris (Columbia spotted frog) protein is Ranatuerin-2La.